Here is a 238-residue protein sequence, read N- to C-terminus: Ephrin-A3 (238 aa).

The N-terminal stretch at 1-22 is a signal peptide; that stretch reads MAAAPLLLLLLLVPVPLLPLLA. The 140-residue stretch at 30-169 folds into the Ephrin RBD domain; the sequence is GNRHAVYWNS…RMKVFVCCAS (140 aa). 3 N-linked (GlcNAc...) asparagine glycosylation sites follow: Asn-38, Asn-67, and Asn-100. 2 disulfide bridges follow: Cys-63–Cys-110 and Cys-99–Cys-158. The GPI-anchor amidated glycine moiety is linked to residue Gly-214. Positions 215–238 are cleaved as a propeptide — removed in mature form; sequence TSPKREHLPLAVGIAFFLMTFLAS.

It belongs to the ephrin family. In terms of assembly, interacts with EPHA8; activates EPHA8. Expressed in brain, skeletal muscle, spleen, thymus, prostate, testis, ovary, small intestine, and peripheral blood leukocytes.

The protein resides in the cell membrane. In terms of biological role, cell surface GPI-bound ligand for Eph receptors, a family of receptor tyrosine kinases which are crucial for migration, repulsion and adhesion during neuronal, vascular and epithelial development. Binds promiscuously Eph receptors residing on adjacent cells, leading to contact-dependent bidirectional signaling into neighboring cells. The signaling pathway downstream of the receptor is referred to as forward signaling while the signaling pathway downstream of the ephrin ligand is referred to as reverse signaling. This Homo sapiens (Human) protein is Ephrin-A3 (EFNA3).